A 589-amino-acid polypeptide reads, in one-letter code: 3-hydroxy-3-methylglutaryl coenzyme A reductase 2-B (589 aa).

Over 1 to 35 (MDVRRRPVTKTLTAGEPLKSQNQHSSSLKASDALP) the chain is Lumenal. The chain crosses the membrane as a helical span at residues 36–56 (LPLYLTNGLFFTMFFSVMYFL). Over 57–79 (LHRWREKIRNSVPLHVVTLSELA) the chain is Cytoplasmic. A helical membrane pass occupies residues 80 to 100 (ALVLLVASVIYLLGFFGIGFV). Residues 101–544 (QSLIRPSPDS…SKESPGPNSR (444 aa)) are Lumenal-facing. A glycan (N-linked (GlcNAc...) asparagine) is linked at Asn256. The active-site Charge relay system is Glu268. A glycan (N-linked (GlcNAc...) asparagine) is linked at Asn332. Active-site charge relay system residues include Lys400 and Asp476. A helical membrane pass occupies residues 545-565 (LLASIVAGSVLAGELSLMSAL). Topologically, residues 566–589 (AAGQLVKSHMKFNRSSKDVSKLSS) are cytoplasmic. The Proton donor role is filled by His574.

It belongs to the HMG-CoA reductase family.

The protein localises to the endoplasmic reticulum membrane. The catalysed reaction is (R)-mevalonate + 2 NADP(+) + CoA = (3S)-3-hydroxy-3-methylglutaryl-CoA + 2 NADPH + 2 H(+). It participates in metabolic intermediate biosynthesis; (R)-mevalonate biosynthesis; (R)-mevalonate from acetyl-CoA: step 3/3. In terms of biological role, catalyzes the synthesis of mevalonate, the specific precursor of all isoprenoid compounds present in plants. Component of the triterpene saponins (e.g. ginsenosides or panaxosides) and phytosterols biosynthetic pathways. Promotes triterpenes accumulation in roots. The sequence is that of 3-hydroxy-3-methylglutaryl coenzyme A reductase 2-B from Panax ginseng (Korean ginseng).